Consider the following 427-residue polypeptide: Acetylornithine aminotransferase (427 aa).

Residues 1–23 form a disordered region; the sequence is MSLQTLIEQATNPPESGSAASSP. Pyridoxal 5'-phosphate contacts are provided by residues 124–125 and phenylalanine 157; that span reads GA. Arginine 160 contacts N(2)-acetyl-L-ornithine. 248-251 lines the pyridoxal 5'-phosphate pocket; that stretch reads DEVQ. An N6-(pyridoxal phosphate)lysine modification is found at lysine 277. Serine 304 is a binding site for N(2)-acetyl-L-ornithine. A pyridoxal 5'-phosphate-binding site is contributed by threonine 305.

This sequence belongs to the class-III pyridoxal-phosphate-dependent aminotransferase family. ArgD subfamily. In terms of assembly, homodimer. Pyridoxal 5'-phosphate serves as cofactor.

Its subcellular location is the cytoplasm. The catalysed reaction is N(2)-acetyl-L-ornithine + 2-oxoglutarate = N-acetyl-L-glutamate 5-semialdehyde + L-glutamate. It participates in amino-acid biosynthesis; L-arginine biosynthesis; N(2)-acetyl-L-ornithine from L-glutamate: step 4/4. The sequence is that of Acetylornithine aminotransferase from Nostoc sp. (strain PCC 7120 / SAG 25.82 / UTEX 2576).